The primary structure comprises 248 residues: Probable transcriptional regulatory protein Acid_5948 (248 aa).

The protein belongs to the TACO1 family.

It localises to the cytoplasm. In Solibacter usitatus (strain Ellin6076), this protein is Probable transcriptional regulatory protein Acid_5948.